A 228-amino-acid chain; its full sequence is Uracil-DNA glycosylase (228 aa).

Aspartate 65 acts as the Proton acceptor in catalysis.

Belongs to the uracil-DNA glycosylase (UDG) superfamily. UNG family.

It localises to the cytoplasm. The enzyme catalyses Hydrolyzes single-stranded DNA or mismatched double-stranded DNA and polynucleotides, releasing free uracil.. In terms of biological role, excises uracil residues from the DNA which can arise as a result of misincorporation of dUMP residues by DNA polymerase or due to deamination of cytosine. This Lacticaseibacillus paracasei (strain ATCC 334 / BCRC 17002 / CCUG 31169 / CIP 107868 / KCTC 3260 / NRRL B-441) (Lactobacillus paracasei) protein is Uracil-DNA glycosylase.